A 127-amino-acid polypeptide reads, in one-letter code: Small ribosomal subunit protein uS11 (127 aa).

Belongs to the universal ribosomal protein uS11 family. Part of the 30S ribosomal subunit. Interacts with proteins S7 and S18. Binds to IF-3.

Functionally, located on the platform of the 30S subunit, it bridges several disparate RNA helices of the 16S rRNA. Forms part of the Shine-Dalgarno cleft in the 70S ribosome. The polypeptide is Small ribosomal subunit protein uS11 (Chlorobaculum tepidum (strain ATCC 49652 / DSM 12025 / NBRC 103806 / TLS) (Chlorobium tepidum)).